We begin with the raw amino-acid sequence, 806 residues long: MERLKLGKIPEHWCIRLVAMLLLAIIFLPSTFCDIGSVYNSSYETVIPERLPGKGGKDPGGKVSYMLLMQGQKQLLHLEVKGHYPENNFPVYSYHNGILRQEMPLLSQDCHYEGYMEGVPGSFVSVNICSGLRGVLIKEETSYGIEPMLSSKNFEHVLYTMEHQPVVSCSVTPKDSPGDTSHPPRSRKPDDLLVLTDWWSHTKYVEMFVVVNHQRFQMWGSNINETVQAVMDIIALANSFTRGINTEVVLVGLEIWTEGDPIEVPVDLQTTLRNFNFWRQEKLVGRVRHDVAHLIVGHRPGENEGQAFLRGACSGEFAAAVEAFHHEDVLLFAALMAHELGHNLGIQHDHPTCTCGPKHFCLMGEKIGKDSGFSNCSSDHFLRFLHDHRGVCLLDEPGRQSRMRRAANCGNGVVEDLEQCDCGSDCDKSQCCDENCKLKGNSVCSTELCCFKCNFKKEGDVCRPADGPCDLEEYCNGTSAACPSDRKAQDGSKCHESFLCFNGQCMDPTFQCSRIFGHGSRSASDYCYTSLNSRGDQFGNCGSSSQFPKKYTKCSDKNVMCGKLICTEVAFLPQIQPNNLLLQVPETEDWCWSVAVFDMRDSLHEEYVKDNTYCGKDKVCKNSICEDFTPFSFPCSPSKQCNKHGVCNDLGNCHCSFGFAPPDCKEEGTGGSVDSGPAVNLSNDSSPGPNSTQSSTEELILNLKLIVLAVILVLMILLIIICIISAYTKSETASEAGPSELEELPEGEKEEQEEVLPEEAKGEEEELEYGKEEAEEQGAVEEEGAEEANEEAAAEKKDEDEEEGEE.

The first 33 residues, 1-33 (MERLKLGKIPEHWCIRLVAMLLLAIIFLPSTFC), serve as a signal peptide directing secretion. The tract at residues 169–188 (CSVTPKDSPGDTSHPPRSRK) is disordered. The Peptidase M12B domain occupies 203-397 (KYVEMFVVVN…HRGVCLLDEP (195 aa)). N-linked (GlcNAc...) asparagine glycosylation is present at N224. 7 disulfide bridges follow: C313–C392, C353–C376, C355–C361, C462–C482, C635–C647, C641–C653, and C655–C664. H338 is a binding site for Zn(2+). E339 is an active-site residue. 2 residues coordinate Zn(2+): H342 and H348. N-linked (GlcNAc...) asparagine glycans are attached at residues N375 and N476. The Disintegrin domain maps to 406–490 (AANCGNGVVE…ACPSDRKAQD (85 aa)). The EGF-like domain maps to 631–665 (FSFPCSPSKQCNKHGVCNDLGNCHCSFGFAPPDCK). Residues 668-694 (GTGGSVDSGPAVNLSNDSSPGPNSTQS) form a disordered region. N-linked (GlcNAc...) asparagine glycosylation is found at N680, N683, and N690. A compositionally biased stretch (polar residues) spans 680-694 (NLSNDSSPGPNSTQS). A helical transmembrane segment spans residues 705–725 (LIVLAVILVLMILLIIICIIS). Topologically, residues 726–806 (AYTKSETASE…KDEDEEEGEE (81 aa)) are cytoplasmic. The segment at 735–806 (EAGPSELEEL…KDEDEEEGEE (72 aa)) is disordered. Over residues 740-806 (ELEELPEGEK…KDEDEEEGEE (67 aa)) the composition is skewed to acidic residues.

As to quaternary structure, heterodimer with ADAM2/fertilin subunit beta. Testis.

Its subcellular location is the membrane. Functionally, may play a role in spermatogenesis and sperm maturation. The polypeptide is Disintegrin and metalloproteinase domain-containing protein 1b (Adam1b) (Mus musculus (Mouse)).